Consider the following 484-residue polypeptide: Putative cysteine ligase BshC (484 aa).

A coiled-coil region spans residues 372-435 (RAFRDRVEGL…AARDEVLARH (64 aa)).

This sequence belongs to the BshC family.

This Thermus thermophilus (strain ATCC 27634 / DSM 579 / HB8) protein is Putative cysteine ligase BshC.